The chain runs to 374 residues: U-box domain-containing protein 8 (374 aa).

In terms of domain architecture, U-box spans 4 to 79; the sequence is DLPNDFRCPI…LNFAHVSLKE (76 aa). 5 ARM repeats span residues 126–165, 167–206, 208–248, 250–288, and 289–327; these read SSIR…NLSL, DDNK…SLAV, EVNK…ALCS, PDNR…KCRG, and GREE…CLCC.

Expressed in the whole plant.

The enzyme catalyses S-ubiquitinyl-[E2 ubiquitin-conjugating enzyme]-L-cysteine + [acceptor protein]-L-lysine = [E2 ubiquitin-conjugating enzyme]-L-cysteine + N(6)-ubiquitinyl-[acceptor protein]-L-lysine.. It functions in the pathway protein modification; protein ubiquitination. Functions as an E3 ubiquitin ligase. Involved in the age-dependent pseudo-self-compatibility process. The sequence is that of U-box domain-containing protein 8 (PUB8) from Arabidopsis thaliana (Mouse-ear cress).